The following is a 435-amino-acid chain: Monodehydroascorbate reductase 4, cytosolic (435 aa).

FAD-binding positions include Gly-14 to Ala-17, Glu-41, Arg-48, Lys-53, Ile-96, and Arg-147 to Asp-148. NAD(+)-binding positions include Gly-172–Glu-178, Glu-196, Arg-202, and Gly-261. Tyr-174–Glu-178 serves as a coordination point for NADP(+). NADP(+) contacts are provided by Arg-202 and Gly-261. Asp-298 serves as a coordination point for FAD. NAD(+) is bound at residue Glu-314 to His-315. Glu-314–His-315 contacts NADP(+). Val-316 is an FAD binding site. Arg-320 contacts L-ascorbate. Residue Tyr-349 coordinates FAD. NAD(+) is bound at residue Tyr-349. Tyr-349 serves as a coordination point for NADP(+). Residue Arg-351 coordinates L-ascorbate.

Belongs to the FAD-dependent oxidoreductase family. Requires FAD as cofactor. Expressed in anthers.

The protein localises to the cytoplasm. The enzyme catalyses 2 monodehydro-L-ascorbate radical + NADH + H(+) = 2 L-ascorbate + NAD(+). In terms of biological role, catalyzes the conversion of monodehydroascorbate to ascorbate, oxidizing NADH in the process. Ascorbate is a major antioxidant against reactive oxygen species (ROS) and nitric oxide (NO). This chain is Monodehydroascorbate reductase 4, cytosolic, found in Oryza sativa subsp. japonica (Rice).